The chain runs to 2510 residues: Highly reducing polyketide synthase g433 (2510 aa).

Positions 1-54 (MAPGRTDVTVAENGNGLHTAHNGVSNGTSNGTNGTSHTSNGTNSSAKTTSNGVH) are disordered. The span at 22 to 45 (NGVSNGTSNGTNGTSHTSNGTNSS) shows a compositional bias: low complexity. One can recognise a Ketosynthase family 3 (KS3) domain in the interval 58 to 477 (DIPIAIVGMG…GANAHAVIDS (420 aa)). Catalysis depends on for beta-ketoacyl synthase activity residues C229, H365, and H400. A malonyl-CoA:ACP transacylase (MAT) domain region spans residues 574–880 (FVFTGQGAQW…VPTLVRGQND (307 aa)). The interval 942–1070 (HDLLGCQVFE…GQVKAGRADS (129 aa)) is N-terminal hotdog fold. The interval 942 to 1226 (HDLLGCQVFE…NLRLAPAADD (285 aa)) is dehydratase (DH) domain. In terms of domain architecture, PKS/mFAS DH spans 942–1229 (HDLLGCQVFE…LAPAADDTGG (288 aa)). The active-site Proton acceptor; for dehydratase activity is the H974. Residues 1083–1229 (PRKVSSTRWY…LAPAADDTGG (147 aa)) are C-terminal hotdog fold. D1144 (proton donor; for dehydratase activity) is an active-site residue. The tract at residues 1395–1574 (DFLGLVSHDK…FDGAEAVIYD (180 aa)) is methyltransferase (CMet) domain. An enoyl reductase (ER) (ER) domain region spans residues 1787-2097 (GSLKTLRWVQ…KGQHMGKLVI (311 aa)). The tract at residues 2122–2296 (SYLLVGGLGG…ASVLDISIIE (175 aa)) is ketoreductase (KR) domain. A Carrier domain is found at 2419 to 2496 (SSVSFLANEI…KLGEAAAEGL (78 aa)). Position 2456 is an O-(pantetheine 4'-phosphoryl)serine (S2456).

Its pathway is mycotoxin biosynthesis. In terms of biological role, highly reducing polyketide synthase; part of the gene cluster that mediates the biosynthesis of 1233A, a natural compound known as an inhibitor of HMG-CoA synthase in the mevalonate pathway and with antibacterial and antifungal activities. The highly reducing polyketide synthase g433 gene is responsible for the 1233A backbone biosynthesis and the cytochrome P450 monooxygenase g430 catalyzes oxidation of the backbone. This Fusarium sp protein is Highly reducing polyketide synthase g433.